Here is a 500-residue protein sequence, read N- to C-terminus: Aspartyl/glutamyl-tRNA(Asn/Gln) amidotransferase subunit B (500 aa).

It belongs to the GatB/GatE family. GatB subfamily. Heterotrimer of A, B and C subunits.

The catalysed reaction is L-glutamyl-tRNA(Gln) + L-glutamine + ATP + H2O = L-glutaminyl-tRNA(Gln) + L-glutamate + ADP + phosphate + H(+). It catalyses the reaction L-aspartyl-tRNA(Asn) + L-glutamine + ATP + H2O = L-asparaginyl-tRNA(Asn) + L-glutamate + ADP + phosphate + 2 H(+). Allows the formation of correctly charged Asn-tRNA(Asn) or Gln-tRNA(Gln) through the transamidation of misacylated Asp-tRNA(Asn) or Glu-tRNA(Gln) in organisms which lack either or both of asparaginyl-tRNA or glutaminyl-tRNA synthetases. The reaction takes place in the presence of glutamine and ATP through an activated phospho-Asp-tRNA(Asn) or phospho-Glu-tRNA(Gln). This chain is Aspartyl/glutamyl-tRNA(Asn/Gln) amidotransferase subunit B, found in Rhizobium johnstonii (strain DSM 114642 / LMG 32736 / 3841) (Rhizobium leguminosarum bv. viciae).